The chain runs to 23 residues: Septenin 2 (23 aa).

As to expression, expressed in skin glands.

The protein localises to the secreted. Its function is as follows. May act as an antimicrobial peptide. This chain is Septenin 2, found in Osteopilus septentrionalis (Cuban treefrog).